Reading from the N-terminus, the 181-residue chain is uncharacterized protein (181 aa).

The interval 151 to 181 (AQKKKDFQEPENKHEQLTSTKAPCQENWSDF) is disordered. Basic and acidic residues predominate over residues 154–166 (KKDFQEPENKHEQ). Over residues 167–181 (LTSTKAPCQENWSDF) the composition is skewed to polar residues.

This is an uncharacterized protein from Caenorhabditis elegans.